The sequence spans 448 residues: Phosphoglucosamine mutase (448 aa).

S100 functions as the Phosphoserine intermediate in the catalytic mechanism. The Mg(2+) site is built by S100, D240, D242, and D244. At S100 the chain carries Phosphoserine.

It belongs to the phosphohexose mutase family. Mg(2+) is required as a cofactor. In terms of processing, activated by phosphorylation.

The enzyme catalyses alpha-D-glucosamine 1-phosphate = D-glucosamine 6-phosphate. Functionally, catalyzes the conversion of glucosamine-6-phosphate to glucosamine-1-phosphate. This Bacillus pumilus (strain SAFR-032) protein is Phosphoglucosamine mutase.